Consider the following 507-residue polypeptide: Putative pentatricopeptide repeat-containing protein At3g16710, mitochondrial (507 aa).

Residues 1 to 48 (MRRSIATGFASIVKGFHLHSHRHRLQISNPRTAASLSLCGFCFWIRAF) constitute a mitochondrion transit peptide. 13 PPR repeats span residues 47 to 81 (AFSS…RPLP), 82 to 116 (SIID…GIPP), 117 to 151 (LLCT…GFEP), 152 to 186 (DLVT…GFKP), 187 to 221 (NVVT…GSRP), 222 to 256 (NVVT…RIEP), 257 to 291 (NVIT…SVYP), 292 to 326 (DVFT…GCYP), 327 to 361 (NEVI…GVVA), 362 to 396 (NTIT…RAPP), 397 to 431 (DIRT…EMDI), 432 to 466 (NIVT…GMKP), and 467 to 501 (NVIT…GFLP).

Belongs to the PPR family. P subfamily.

The protein localises to the mitochondrion. The protein is Putative pentatricopeptide repeat-containing protein At3g16710, mitochondrial of Arabidopsis thaliana (Mouse-ear cress).